The following is a 135-amino-acid chain: Mediator of RNA polymerase II transcription subunit 10 (135 aa).

It belongs to the Mediator complex subunit 10 family. Component of the Mediator complex, which is composed of MED1, MED4, MED6, MED7, MED8, MED9, MED10, MED11, MED12, MED13, MED13L, MED14, MED15, MED16, MED17, MED18, MED19, MED20, MED21, MED22, MED23, MED24, MED25, MED26, MED27, MED29, MED30, MED31, CCNC, CDK8 and CDC2L6/CDK11. The MED12, MED13, CCNC and CDK8 subunits form a distinct module termed the CDK8 module. Mediator containing the CDK8 module is less active than Mediator lacking this module in supporting transcriptional activation. Individual preparations of the Mediator complex lacking one or more distinct subunits have been variously termed ARC, CRSP, DRIP, PC2, SMCC and TRAP.

The protein resides in the nucleus. Functionally, component of the Mediator complex, a coactivator involved in the regulated transcription of nearly all RNA polymerase II-dependent genes. Mediator functions as a bridge to convey information from gene-specific regulatory proteins to the basal RNA polymerase II transcription machinery. Mediator is recruited to promoters by direct interactions with regulatory proteins and serves as a scaffold for the assembly of a functional preinitiation complex with RNA polymerase II and the general transcription factors. The protein is Mediator of RNA polymerase II transcription subunit 10 (MED10) of Macaca fascicularis (Crab-eating macaque).